The chain runs to 431 residues: Beclin-2 (431 aa).

The tract at residues 17 to 74 is disordered; sequence LSGSSESRSLPAAPAPTSGQAEPGDTREPGVTTREVTDAEEQQDGASSRSPPGDGSVS. Residues 125-248 adopt a coiled-coil conformation; it reads LLEQLDIQLA…ARVQRDRLKE (124 aa). The tract at residues 173 to 243 is required for homodimer formation; that stretch reads EARLVQELED…NQLQYARVQR (71 aa).

Belongs to the beclin family. In terms of assembly, homodimer (via coiled-coil domain). Interacts (via coiled-coil domain) with ATG14 (via coiled-coil domain); this interaction is tighter than BECN2 self-association. Interacts with AMBRA1, UVRAG and PIK3C3/VPS34; these interactions are not disrupted by starvation. Does not interact with RUBCN. Interacts (via N-terminus) with GPRASP1/GASP1; the interaction is direct. As to expression, present in fetal and adult brain (at protein level).

It is found in the cytoplasm. In terms of biological role, involved in 2 distinct lysosomal degradation pathways: acts as a regulator of autophagy and as a regulator of G-protein coupled receptors turnover. Regulates degradation in lysosomes of a variety of G-protein coupled receptors via its interaction with GPRASP1/GASP1. The polypeptide is Beclin-2 (Homo sapiens (Human)).